The primary structure comprises 318 residues: MEWENHTILVEFFLKGLSGHPRLELLFFVLIFIMYVVILLGNGTLILISILDPHLHTPMYFFLGNLSFLDICYTTTSIPSTLVSFLSERKTISLSGCAVQMFLSLAMGTTECVLLGVMAFDRYVAICNPLRYPIIMSKDAYVPMAAGSWIIGAVNSAVQTVFVVQLPFCRNNIINHFTCEILAVMKLACADISGNEFILLVTTTLFLLTPLLLIIVSYTLIILSIFKISSSEGRSKPSSTCSARLTVVITFCGTIFLMYMKPKSQETLNSDDLDATDKLIFIFYRVMTPMMNPLIYSLRNKDVKEAVKHLLRRKNFNK.

Over 1–25 the chain is Extracellular; sequence MEWENHTILVEFFLKGLSGHPRLEL. Residue asparagine 5 is glycosylated (N-linked (GlcNAc...) asparagine). The helical transmembrane segment at 26 to 46 threads the bilayer; that stretch reads LFFVLIFIMYVVILLGNGTLI. Residues 47–54 lie on the Cytoplasmic side of the membrane; that stretch reads LISILDPH. Residues 55–75 traverse the membrane as a helical segment; sequence LHTPMYFFLGNLSFLDICYTT. Over 76 to 99 the chain is Extracellular; that stretch reads TSIPSTLVSFLSERKTISLSGCAV. An intrachain disulfide couples cysteine 97 to cysteine 189. The helical transmembrane segment at 100–120 threads the bilayer; that stretch reads QMFLSLAMGTTECVLLGVMAF. At 121-139 the chain is on the cytoplasmic side; it reads DRYVAICNPLRYPIIMSKD. The chain crosses the membrane as a helical span at residues 140–160; that stretch reads AYVPMAAGSWIIGAVNSAVQT. Over 161 to 197 the chain is Extracellular; the sequence is VFVVQLPFCRNNIINHFTCEILAVMKLACADISGNEF. The helical transmembrane segment at 198-217 threads the bilayer; the sequence is ILLVTTTLFLLTPLLLIIVS. The Cytoplasmic portion of the chain corresponds to 218 to 237; sequence YTLIILSIFKISSSEGRSKP. Residues 238-258 form a helical membrane-spanning segment; that stretch reads SSTCSARLTVVITFCGTIFLM. The Extracellular segment spans residues 259–277; it reads YMKPKSQETLNSDDLDATD. The chain crosses the membrane as a helical span at residues 278–298; sequence KLIFIFYRVMTPMMNPLIYSL. The Cytoplasmic segment spans residues 299 to 318; sequence RNKDVKEAVKHLLRRKNFNK.

Belongs to the G-protein coupled receptor 1 family.

It localises to the cell membrane. Its function is as follows. Odorant receptor. The chain is Olfactory receptor 13C5 (OR13C5) from Homo sapiens (Human).